The following is a 684-amino-acid chain: Glycine--tRNA ligase beta subunit (684 aa).

The protein belongs to the class-II aminoacyl-tRNA synthetase family. As to quaternary structure, tetramer of two alpha and two beta subunits.

It localises to the cytoplasm. The catalysed reaction is tRNA(Gly) + glycine + ATP = glycyl-tRNA(Gly) + AMP + diphosphate. The polypeptide is Glycine--tRNA ligase beta subunit (Pseudomonas aeruginosa (strain UCBPP-PA14)).